We begin with the raw amino-acid sequence, 654 residues long: Bifunctional 3'-phosphoadenosine 5'-phosphosulfate synthase pps-1 (654 aa).

A disordered region spans residues 1 to 26 (MLTPRDENNEGDAMPMLKKPRYSSLS). The interval 1–231 (MLTPRDENNE…VLDHLESKGL (231 aa)) is adenylyl-sulfate kinase. Position 66-71 (66-71 (GAGKTT)) interacts with ATP. Adenosine 5'-phosphosulfate contacts are provided by residues 93–96 (DNIR), F105, 110–113 (RQEN), 136–137 (IS), K175, and 190–191 (GF). ATP-binding positions include C218, 449–452 (QLRN), 550–554 (GRDPA), and A592. The tract at residues 242 to 653 (VRELFVSDDL…AGYYKSLQNS (412 aa)) is sulfate adenylyltransferase.

The protein in the N-terminal section; belongs to the APS kinase family. This sequence in the C-terminal section; belongs to the sulfate adenylyltransferase family.

The protein resides in the nucleus. The catalysed reaction is sulfate + ATP + H(+) = adenosine 5'-phosphosulfate + diphosphate. The enzyme catalyses adenosine 5'-phosphosulfate + ATP = 3'-phosphoadenylyl sulfate + ADP + H(+). Its pathway is sulfur metabolism; sulfate assimilation. Functionally, bifunctional enzyme with both ATP sulfurylase and APS kinase activity, which mediates two steps in the sulfate activation pathway. The first step is the transfer of a sulfate group to ATP to yield adenosine 5'-phosphosulfate (APS), and the second step is the transfer of a phosphate group from ATP to APS yielding 3'-phosphoadenylylsulfate (PAPS: activated sulfate donor used by sulfotransferase). Required for normal growth and development. Involved in several aspects of both embryonic and postembryonic development, including molting, changes in cell shape, and patterning of epithelial and muscle cells. The protein is Bifunctional 3'-phosphoadenosine 5'-phosphosulfate synthase pps-1 of Caenorhabditis elegans.